We begin with the raw amino-acid sequence, 167 residues long: Thiol peroxidase (167 aa).

The Thioredoxin domain maps to 18-167 (VKVGDQAPDF…PIEAAKALVK (150 aa)). Cysteine 60 acts as the Cysteine sulfenic acid (-SOH) intermediate in catalysis. Residues cysteine 60 and cysteine 94 are joined by a disulfide bond.

The protein belongs to the peroxiredoxin family. Tpx subfamily. As to quaternary structure, homodimer.

It catalyses the reaction a hydroperoxide + [thioredoxin]-dithiol = an alcohol + [thioredoxin]-disulfide + H2O. Thiol-specific peroxidase that catalyzes the reduction of hydrogen peroxide and organic hydroperoxides to water and alcohols, respectively. Plays a role in cell protection against oxidative stress by detoxifying peroxides. The polypeptide is Thiol peroxidase (Bacillus subtilis (strain 168)).